A 443-amino-acid chain; its full sequence is MISHIKKFINLYTIVFLLYILYSNENFFVKGQKLPPGFCPSPLIYRNTTDRQSDIDIGFQFLGETNCVQPCPSLILTENEWNKVFNMSLVAGTISMFALIFLIITYSPLVNNIKDYTRHTVGILFLFSGILIAMTTDGRQLWDIDLGFKKYCPEPGRFARQSDSKCLVTAIFFQFGCVTALLWWAAISVDLWITIKKIKISKKLFIIYTIAVNIVTIVLTFGPVGSKQYGYIDAAIGCWLMDLKYQVGYFWAPVGFCLCVGCVSIVLILKEIYNVSDAVKKKLLAKHLKPLMLIILMLTEFIYMFIFYSYTTSKKNHYHDIIEEYVVCLFVHAANPSVCKIGSTISPSAHFFFHLCIRLMGLEVLIFYGFTRQTRKIWMRSFWFNNSFIKRFLPSISSSNDSKSSNNKTSGRVTGGFGESSEQSNEPEQSIELSGIDDSKHDP.

The signal sequence occupies residues 1 to 23 (MISHIKKFINLYTIVFLLYILYS). The Extracellular segment spans residues 24-83 (NENFFVKGQKLPPGFCPSPLIYRNTTDRQSDIDIGFQFLGETNCVQPCPSLILTENEWNK). A glycan (N-linked (GlcNAc...) asparagine) is linked at Asn47. A helical transmembrane segment spans residues 84-104 (VFNMSLVAGTISMFALIFLII). Topologically, residues 105 to 120 (TYSPLVNNIKDYTRHT) are cytoplasmic. The helical transmembrane segment at 121 to 141 (VGILFLFSGILIAMTTDGRQL) threads the bilayer. Residues 142–166 (WDIDLGFKKYCPEPGRFARQSDSKC) are Extracellular-facing. A helical transmembrane segment spans residues 167–187 (LVTAIFFQFGCVTALLWWAAI). The Cytoplasmic segment spans residues 188-203 (SVDLWITIKKIKISKK). The helical transmembrane segment at 204–224 (LFIIYTIAVNIVTIVLTFGPV) threads the bilayer. Residues 225–248 (GSKQYGYIDAAIGCWLMDLKYQVG) lie on the Extracellular side of the membrane. The helical transmembrane segment at 249 to 269 (YFWAPVGFCLCVGCVSIVLIL) threads the bilayer. Over 270 to 289 (KEIYNVSDAVKKKLLAKHLK) the chain is Cytoplasmic. The helical transmembrane segment at 290 to 310 (PLMLIILMLTEFIYMFIFYSY) threads the bilayer. The Extracellular portion of the chain corresponds to 311–350 (TTSKKNHYHDIIEEYVVCLFVHAANPSVCKIGSTISPSAH). The chain crosses the membrane as a helical span at residues 351–371 (FFFHLCIRLMGLEVLIFYGFT). Residues 372–443 (RQTRKIWMRS…SGIDDSKHDP (72 aa)) lie on the Cytoplasmic side of the membrane. Low complexity-rich tracts occupy residues 397–410 (SSSN…NKTS) and 419–432 (ESSE…QSIE). A disordered region spans residues 397 to 443 (SSSNDSKSSNNKTSGRVTGGFGESSEQSNEPEQSIELSGIDDSKHDP).

This sequence belongs to the G-protein coupled receptor Fz/Smo family.

The protein localises to the membrane. The polypeptide is Frizzled/smoothened-like sans CRD protein E (fscE) (Dictyostelium discoideum (Social amoeba)).